The primary structure comprises 880 residues: Leucine--tRNA ligase (880 aa).

Positions 49-59 (PYPSGRIHMGH) match the 'HIGH' region motif. The 'KMSKS' region motif lies at 638–642 (KMSKS). ATP is bound at residue lysine 641.

It belongs to the class-I aminoacyl-tRNA synthetase family.

Its subcellular location is the cytoplasm. The catalysed reaction is tRNA(Leu) + L-leucine + ATP = L-leucyl-tRNA(Leu) + AMP + diphosphate. The protein is Leucine--tRNA ligase of Bartonella henselae (strain ATCC 49882 / DSM 28221 / CCUG 30454 / Houston 1) (Rochalimaea henselae).